The following is a 110-amino-acid chain: Small ribosomal subunit protein bS16 (110 aa).

The segment at 84 to 110 is disordered; it reads KREARNNPEKAVPRKERKAAAEAAAKK.

Belongs to the bacterial ribosomal protein bS16 family.

The chain is Small ribosomal subunit protein bS16 from Rhodopseudomonas palustris (strain BisB18).